The chain runs to 860 residues: MSFVRVNRYGPRGGGRKTLKVKKKTSVKQEWDNTVTDLTVHRATPEDLIRRHEIHKSKNRALVHWELQEKALKRRWKKQKPEISNLEKRRLSIMKEILSDQYQLQDVLEKSDHLMATAKGLFVDFPRRRTGFPNVTMAPESSQSPTVVSKDPVTQAIRSESVIEPQALNEVDDDEQEGTVNSQSEESENELDNSLSSQSNANAGTFLHQIKEENSELINKLWTDIQQKVATQSQMTASSGTPSSASPSGEQKAALNATNAVKRIHTRLQPEESTETLDSSYVVGQVLNSRKQKQLLNKVKRKPDSRAPSKQKSSMLSASTASTDLPSSSNPSLDVLKHMIHEVEHEIEEYERWTGREVQGLQNSQGLTGFTLSLVSSLCRLVRYLKESELQLRKEVETRQRLEEALGDHRELIDALTAEVLFLREENTATQARLQQYMITTDEQLISLTHAIKNCPVISNKESQALERGATSQRHIDNPEDPAVNASVSMPLMFRGEDVVEFPQEDLPVKLSQVPNPPESGDLASSLPGHIFEPAVLLTPPRQKSNSEFSPLQDVLRRTVQTRPAPRIPPTVEIIEKEQNWEKKTLPVGADIQNSSDESHLFTQRWRASHMGEDSQSKTQAPFVSLSQPLCSSQSSMQQSRNPTLSEEPLVLGDGQQLRTNETLIQRKDIMARIAELTLQNSDIRAHLNNIIGPGGEQGDGLREFNRQETSHASDTMATFPAVQPLTPSSMEERIAELNRQSMEARGKLLQLIEQQKLLGLNPSSPPVSPVQSPLRAWAEGGKRTIEVSIPGAEAPESSKCSTDSPTSGLNSRRSSGAASNSCSPLNATSGSGRLTPLNPRAKIEKQNEEGWFALSTHVS.

3 disordered regions span residues 160 to 200, 232 to 254, and 293 to 330; these read ESVI…SQSN, QSQM…QKAA, and KQLL…SSSN. Threonine 236 carries the post-translational modification Phosphothreonine. A compositionally biased stretch (low complexity) spans 236-249; the sequence is TASSGTPSSASPSG. Polar residues predominate over residues 308-330; that stretch reads PSKQKSSMLSASTASTDLPSSSN. Positions 383–437 form a coiled coil; sequence RYLKESELQLRKEVETRQRLEEALGDHRELIDALTAEVLFLREENTATQARLQQY. Serine 646 is subject to Phosphoserine. The stretch at 729-755 forms a coiled coil; the sequence is SSMEERIAELNRQSMEARGKLLQLIEQ. Residues serine 765, serine 769, and serine 824 each carry the phosphoserine modification. Residues 790-860 form a disordered region; it reads IPGAEAPESS…GWFALSTHVS (71 aa). Residues 808–824 are compositionally biased toward low complexity; sequence SGLNSRRSSGAASNSCS.

Interacts with CEP120.

It is found in the cytoplasm. Its subcellular location is the cytoskeleton. The protein resides in the microtubule organizing center. It localises to the centrosome. The protein localises to the centriole. It is found in the spindle. Its function is as follows. Regulator required for centriole duplication. for proper bipolar spindle formation and chromosome congression in mitosis. The protein is Spindle and centriole-associated protein 1 (SPICE1) of Bos taurus (Bovine).